The following is a 76-amino-acid chain: Exodeoxyribonuclease 7 small subunit (76 aa).

It belongs to the XseB family. In terms of assembly, heterooligomer composed of large and small subunits.

Its subcellular location is the cytoplasm. It carries out the reaction Exonucleolytic cleavage in either 5'- to 3'- or 3'- to 5'-direction to yield nucleoside 5'-phosphates.. Bidirectionally degrades single-stranded DNA into large acid-insoluble oligonucleotides, which are then degraded further into small acid-soluble oligonucleotides. This Legionella pneumophila subsp. pneumophila (strain Philadelphia 1 / ATCC 33152 / DSM 7513) protein is Exodeoxyribonuclease 7 small subunit.